Reading from the N-terminus, the 141-residue chain is Large ribosomal subunit protein uL11c (141 aa).

Belongs to the universal ribosomal protein uL11 family. Part of the ribosomal stalk of the 50S ribosomal subunit. Interacts with L10 and the large rRNA to form the base of the stalk. L10 forms an elongated spine to which L12 dimers bind in a sequential fashion forming a multimeric L10(L12)X complex.

It is found in the plastid. The protein localises to the chloroplast. In terms of biological role, forms part of the ribosomal stalk which helps the ribosome interact with GTP-bound translation factors. This chain is Large ribosomal subunit protein uL11c, found in Pyropia yezoensis (Susabi-nori).